Reading from the N-terminus, the 234-residue chain is Probable cyclic nucleotide phosphodiesterase Rmag_0669 (234 aa).

Fe cation contacts are provided by Asp11, His13, Asp49, Asn79, His145, His184, and His186. AMP-binding positions include His13, Asp49, and 79–80 (NH). Position 186 (His186) interacts with AMP.

It belongs to the cyclic nucleotide phosphodiesterase class-III family. It depends on Fe(2+) as a cofactor.

The polypeptide is Probable cyclic nucleotide phosphodiesterase Rmag_0669 (Ruthia magnifica subsp. Calyptogena magnifica).